We begin with the raw amino-acid sequence, 1401 residues long: DNA-directed RNA polymerase subunit beta' (1401 aa).

Zn(2+) is bound by residues Cys70, Cys72, Cys85, and Cys88. The Mg(2+) site is built by Asp460, Asp462, and Asp464. 4 residues coordinate Zn(2+): Cys808, Cys882, Cys889, and Cys892.

Belongs to the RNA polymerase beta' chain family. The RNAP catalytic core consists of 2 alpha, 1 beta, 1 beta' and 1 omega subunit. When a sigma factor is associated with the core the holoenzyme is formed, which can initiate transcription. Mg(2+) is required as a cofactor. It depends on Zn(2+) as a cofactor.

It catalyses the reaction RNA(n) + a ribonucleoside 5'-triphosphate = RNA(n+1) + diphosphate. In terms of biological role, DNA-dependent RNA polymerase catalyzes the transcription of DNA into RNA using the four ribonucleoside triphosphates as substrates. The chain is DNA-directed RNA polymerase subunit beta' from Legionella pneumophila (strain Paris).